A 453-amino-acid chain; its full sequence is GTPase Der (453 aa).

EngA-type G domains are found at residues 3–178 (PKIA…PNNE) and 190–363 (LKLA…LECS). Residues 9 to 16 (GRPNVGKS), 57 to 61 (DTGGV), 130 to 133 (NKVD), 196 to 203 (GRPNAGKS), 243 to 247 (DTAGI), and 308 to 311 (NKTD) each bind GTP. Residues 364–448 (TRINTGVLNR…PIRIRLRSSH (85 aa)) form the KH-like domain.

This sequence belongs to the TRAFAC class TrmE-Era-EngA-EngB-Septin-like GTPase superfamily. EngA (Der) GTPase family. Associates with the 50S ribosomal subunit.

In terms of biological role, GTPase that plays an essential role in the late steps of ribosome biogenesis. This chain is GTPase Der, found in Lawsonia intracellularis (strain PHE/MN1-00).